The primary structure comprises 404 residues: Cysteine--tRNA ligase (404 aa).

Residue Cys-14 participates in Zn(2+) binding. The 'HIGH' region motif lies at 16-26; it reads PTVYSDVHIGN. 3 residues coordinate Zn(2+): Cys-190, His-216, and Glu-220. The 'KMSKS' region signature appears at 248-252; that stretch reads KMAKS. Lys-251 contributes to the ATP binding site.

This sequence belongs to the class-I aminoacyl-tRNA synthetase family. As to quaternary structure, monomer. It depends on Zn(2+) as a cofactor.

Its subcellular location is the cytoplasm. It carries out the reaction tRNA(Cys) + L-cysteine + ATP = L-cysteinyl-tRNA(Cys) + AMP + diphosphate. In Mesomycoplasma hyopneumoniae (strain 232) (Mycoplasma hyopneumoniae), this protein is Cysteine--tRNA ligase.